The sequence spans 92 residues: Small ribosomal subunit protein uS19 (92 aa).

This sequence belongs to the universal ribosomal protein uS19 family.

Functionally, protein S19 forms a complex with S13 that binds strongly to the 16S ribosomal RNA. The chain is Small ribosomal subunit protein uS19 from Xanthobacter autotrophicus (strain ATCC BAA-1158 / Py2).